Consider the following 82-residue polypeptide: uncharacterized protein (82 aa).

Positions 1–11 (MKARGSRENAS) are enriched in basic and acidic residues. Residues 1-25 (MKARGSRENASKRRPSQTQYDTHLR) form a disordered region. Residues 16–25 (SQTQYDTHLR) are compositionally biased toward polar residues.

This is an uncharacterized protein from Human cytomegalovirus (strain AD169) (HHV-5).